Consider the following 243-residue polypeptide: Carboxy-S-adenosyl-L-methionine synthase (243 aa).

Residues Tyr40, Gly65–Ser67, Asp90–Asn91, Asp118–Ile119, Asn133, and Arg200 contribute to the S-adenosyl-L-methionine site.

This sequence belongs to the class I-like SAM-binding methyltransferase superfamily. Cx-SAM synthase family. In terms of assembly, homodimer.

The enzyme catalyses prephenate + S-adenosyl-L-methionine = carboxy-S-adenosyl-L-methionine + 3-phenylpyruvate + H2O. Catalyzes the conversion of S-adenosyl-L-methionine (SAM) to carboxy-S-adenosyl-L-methionine (Cx-SAM). The polypeptide is Carboxy-S-adenosyl-L-methionine synthase (Shewanella baltica (strain OS155 / ATCC BAA-1091)).